The sequence spans 382 residues: 3-ketosteroid-9-alpha-monooxygenase, oxygenase component (382 aa).

Residues 20 to 122 (WHCLGLSRTF…TMEKHGQLFV (103 aa)) enclose the Rieske domain. [2Fe-2S] cluster-binding residues include Cys-61, His-63, Cys-80, and His-83. 4 residues coordinate Fe cation: Asn-169, His-175, His-180, and Asp-298.

As to quaternary structure, homotrimer. The two-component system 3-ketosteroid-9-alpha-monooxygenase is composed of an oxygenase component KshA and a reductase component KshB. Requires [2Fe-2S] cluster as cofactor. Fe cation serves as cofactor.

It carries out the reaction androsta-1,4-diene-3,17-dione + 2 reduced [2Fe-2S]-[ferredoxin] + O2 + 2 H(+) = 9alpha-hydroxyandrosta-1,4-diene-3,17-dione + 2 oxidized [2Fe-2S]-[ferredoxin] + H2O. In vitro, catalyzes the introduction of a 9alpha-hydroxyl moiety into the ring B of 3-ketosteroid substrates such as 1,4-androstadiene-3,17-dione (ADD), 4-androstene-3,17-dione (AD), 4-androstene-17beta-ol-3-one (testosterone), 4-pregnene-3,20-dione (progesterone), 23,24-bisnorcholesta-4-ene-22-oate and 23,24-bisnorcholesta-1,4-diene-22-oate. In Rhodococcus rhodochrous, this protein is 3-ketosteroid-9-alpha-monooxygenase, oxygenase component.